The chain runs to 210 residues: Uracil phosphoribosyltransferase (210 aa).

5-phospho-alpha-D-ribose 1-diphosphate-binding positions include arginine 78, arginine 103, and 130 to 138 (DPMLATGGT). Uracil-binding positions include isoleucine 193 and 198-200 (GDA). Aspartate 199 contacts 5-phospho-alpha-D-ribose 1-diphosphate.

It belongs to the UPRTase family. Mg(2+) is required as a cofactor.

The enzyme catalyses UMP + diphosphate = 5-phospho-alpha-D-ribose 1-diphosphate + uracil. It functions in the pathway pyrimidine metabolism; UMP biosynthesis via salvage pathway; UMP from uracil: step 1/1. Its activity is regulated as follows. Allosterically activated by GTP. Catalyzes the conversion of uracil and 5-phospho-alpha-D-ribose 1-diphosphate (PRPP) to UMP and diphosphate. This Xanthomonas axonopodis pv. citri (strain 306) protein is Uracil phosphoribosyltransferase.